The sequence spans 938 residues: Isoleucine--tRNA ligase (938 aa).

The 'HIGH' region signature appears at 58 to 68 (PYANGSIHIGH). K183 bears the N6-acetyllysine mark. Position 561 (E561) interacts with L-isoleucyl-5'-AMP. The 'KMSKS' region signature appears at 602–606 (KMSKS). K605 contacts ATP. C901, C904, C921, and C924 together coordinate Zn(2+).

The protein belongs to the class-I aminoacyl-tRNA synthetase family. IleS type 1 subfamily. As to quaternary structure, monomer. Zn(2+) is required as a cofactor.

It is found in the cytoplasm. It catalyses the reaction tRNA(Ile) + L-isoleucine + ATP = L-isoleucyl-tRNA(Ile) + AMP + diphosphate. Its function is as follows. Catalyzes the attachment of isoleucine to tRNA(Ile). As IleRS can inadvertently accommodate and process structurally similar amino acids such as valine, to avoid such errors it has two additional distinct tRNA(Ile)-dependent editing activities. One activity is designated as 'pretransfer' editing and involves the hydrolysis of activated Val-AMP. The other activity is designated 'posttransfer' editing and involves deacylation of mischarged Val-tRNA(Ile). The chain is Isoleucine--tRNA ligase from Escherichia coli O127:H6 (strain E2348/69 / EPEC).